The sequence spans 458 residues: Cysteine--tRNA ligase (458 aa).

Cysteine 33 is a binding site for Zn(2+). The short motif at 35-45 (PTVYDFAHIGN) is the 'HIGH' region element. Positions 221, 246, and 250 each coordinate Zn(2+). The 'KMSKS' region motif lies at 279 to 283 (KMSKS). Position 282 (lysine 282) interacts with ATP.

This sequence belongs to the class-I aminoacyl-tRNA synthetase family. In terms of assembly, monomer. Zn(2+) is required as a cofactor.

The protein localises to the cytoplasm. The catalysed reaction is tRNA(Cys) + L-cysteine + ATP = L-cysteinyl-tRNA(Cys) + AMP + diphosphate. This Rhizobium etli (strain ATCC 51251 / DSM 11541 / JCM 21823 / NBRC 15573 / CFN 42) protein is Cysteine--tRNA ligase.